A 657-amino-acid polypeptide reads, in one-letter code: Penicillin-binding protein activator LpoA (657 aa).

The N-terminal stretch at 1 to 25 is a signal peptide; sequence MLSSTFVRSKAGLVPVILAALILAA. Residue Cys26 is the site of N-palmitoyl cysteine attachment. Cys26 carries S-diacylglycerol cysteine lipidation.

It belongs to the LpoA family. Interacts with PBP1a.

It localises to the cell outer membrane. Regulator of peptidoglycan synthesis that is essential for the function of penicillin-binding protein 1A (PBP1a). This is Penicillin-binding protein activator LpoA from Yersinia pestis bv. Antiqua (strain Angola).